A 1450-amino-acid polypeptide reads, in one-letter code: DNA-directed RNA polymerase RPB1 homolog (1450 aa).

Belongs to the RNA polymerase beta' chain family. Part of the viral DNA-directed RNA polymerase that consists of 8 polII-like subunits (RPB1, RPB2, RPB3, RPB5, RPB6, RPB7, RPB9, RPB10), a capping enzyme and a termination factor.

The protein localises to the virion. It catalyses the reaction RNA(n) + a ribonucleoside 5'-triphosphate = RNA(n+1) + diphosphate. In terms of biological role, catalytic component of the DNA-directed RNA polymerase (RNAP) that catalyzes the transcription in the cytoplasm of viral DNA into RNA using the four ribonucleoside triphosphates as substrates. Forms the polymerase active center together with RPB2. Part of the core element with the central large cleft, the clamp element that moves to open and close the cleft and the jaws that are thought to grab the incoming DNA template. The protein is DNA-directed RNA polymerase RPB1 homolog of African swine fever virus (strain Badajoz 1971 Vero-adapted) (Ba71V).